The sequence spans 98 residues: NADH-ubiquinone oxidoreductase chain 4L (98 aa).

Helical transmembrane passes span 1 to 21, 29 to 49, and 58 to 78; these read MPII…GMLF, SLLC…LMAL, and IVPI…LALL.

It belongs to the complex I subunit 4L family. Core subunit of respiratory chain NADH dehydrogenase (Complex I) which is composed of 45 different subunits.

Its subcellular location is the mitochondrion inner membrane. The enzyme catalyses a ubiquinone + NADH + 5 H(+)(in) = a ubiquinol + NAD(+) + 4 H(+)(out). Functionally, core subunit of the mitochondrial membrane respiratory chain NADH dehydrogenase (Complex I) which catalyzes electron transfer from NADH through the respiratory chain, using ubiquinone as an electron acceptor. Part of the enzyme membrane arm which is embedded in the lipid bilayer and involved in proton translocation. This is NADH-ubiquinone oxidoreductase chain 4L (MT-ND4L) from Trachypithecus obscurus (Dusky leaf-monkey).